The following is a 326-amino-acid chain: Vascular endothelial growth factor D (326 aa).

A signal peptide spans 1 to 21 (MYGEWAAVNILMMSYVYLVQG). Positions 22-93 (FSIEHRAVKD…SRSTSHRSTR (72 aa)) are excised as a propeptide. 3 disulfides stabilise this stretch: Cys116–Cys158, Cys147–Cys194, and Cys151–Cys196. N-linked (GlcNAc...) asparagine glycans are attached at residues Asn160 and Asn190. A propeptide spanning residues 211–326 (SIQIPEEDQC…CRSMVFSLSP (116 aa)) is cleaved from the precursor. Residues 227 to 242 (CPVDMLWDNTKCKCVL) form a 1; approximate repeat. Residues 227-317 (CPVDMLWDNT…KHKMFHPDTC (91 aa)) are 4 X 16 AA repeats of C-X(10)-C-X-C-X(1,3)-C. A run of 2 repeats spans residues 263-278 (CGPHMMFDEDRCECVC) and 282-298 (CPGDLIQHPENCSCFEC). N-linked (GlcNAc...) asparagine glycosylation occurs at Asn292. The stretch at 306–317 (CQKHKMFHPDTC) is one 4; truncated repeat.

Belongs to the PDGF/VEGF growth factor family. As to quaternary structure, homodimer; non-covalent and antiparallel. In terms of processing, undergoes a complex proteolytic maturation which generates a variety of processed secreted forms with increased activity toward VEGFR-3 and VEGFR-2. VEGF-D first form an antiparallel homodimer linked by disulfide bonds before secretion. The fully processed VEGF-D is composed mostly of two VEGF homology domains (VHDs) bound by non-covalent interactions. In terms of tissue distribution, highly expressed in the spleen, kidney, lung, tongue, ovary and mammary gland.

The protein localises to the secreted. Growth factor active in angiogenesis, lymphangiogenesis and endothelial cell growth, stimulating their proliferation and migration and also has effects on the permeability of blood vessels. May function in the formation of the venous and lymphatic vascular systems during embryogenesis, and also in the maintenance of differentiated lymphatic endothelium in adults. Binds and activates VEGFR-3 (Flt4) receptor. The protein is Vascular endothelial growth factor D of Rattus norvegicus (Rat).